The chain runs to 79 residues: Ferredoxin oxidoreductase 1 subunit ForD (79 aa).

2 4Fe-4S ferredoxin-type domains span residues 3–35 (YVAQ…YTDE) and 37–65 (HHAY…RDSI). 8 residues coordinate [4Fe-4S] cluster: C12, C17, C20, C24, C46, C49, C52, and C56.

As to quaternary structure, heterotetramer of one alpha, one beta, one delta and one gamma chain. [4Fe-4S] cluster is required as a cofactor.

The polypeptide is Ferredoxin oxidoreductase 1 subunit ForD (forD1) (Aquifex aeolicus (strain VF5)).